The sequence spans 1241 residues: Intraflagellar transport protein 122 homolog (1241 aa).

4 WD repeats span residues 10-50 (KAEH…QPLK), 51-91 (GHKD…LKYT), 93-129 (NDAIQCVSYNPITHQLASCSSSDFGLWSPEQKSVSKH), and 131-169 (SSSKIICCSWTNDGQYLALGMFNGIISIRNKNGEEKVKI). The disordered stretch occupies residues 222–246 (VYSSQGSEAEEEEPEEEDDSPRDDN). A compositionally biased stretch (acidic residues) spans 229 to 242 (EAEEEEPEEEDDSP). 3 WD repeats span residues 278–317 (ALNFDPCCISYFTKGEYILLGGSDKQVSLFTKDGVRLGTV), 319–359 (EQNS…HGLY), and 512–551 (KQATAVRCLDMSASRKKLAVVDENDTCLVYDIDTKELLFQ).

Component of the IFT complex A (IFT-A) complex. IFT-A complex is divided into a core subcomplex composed of IFT122:IFT140:WDR19 which is associated with TULP3 and a peripheral subcomplex composed of IFT43:WDR35:TTC21B. Interacts with IFT43:WDR35; the interaction connects the 2 IFT-A subcomplexes. Interacts with IFTAP; the interaction associates IFTAP with IFT-A complex. Expressed in many tissues. Predominant expression in testis and pituitary.

It localises to the cell projection. The protein localises to the cilium. Its subcellular location is the cytoplasm. It is found in the cytoskeleton. The protein resides in the cilium basal body. As a component of the IFT complex A (IFT-A), a complex required for retrograde ciliary transport and entry into cilia of G protein-coupled receptors (GPCRs), it is required in ciliogenesis and ciliary protein trafficking. Involved in cilia formation during neuronal patterning. Acts as a negative regulator of Shh signaling. Required to recruit TULP3 to primary cilia. This Homo sapiens (Human) protein is Intraflagellar transport protein 122 homolog.